The sequence spans 79 residues: Acyl carrier protein (79 aa).

The Carrier domain occupies 2-77 (SEIGERVKKI…DATKFLEKNA (76 aa)). Position 37 is an O-(pantetheine 4'-phosphoryl)serine (Ser37).

This sequence belongs to the acyl carrier protein (ACP) family. 4'-phosphopantetheine is transferred from CoA to a specific serine of apo-ACP by AcpS. This modification is essential for activity because fatty acids are bound in thioester linkage to the sulfhydryl of the prosthetic group.

The protein localises to the cytoplasm. It functions in the pathway lipid metabolism; fatty acid biosynthesis. Carrier of the growing fatty acid chain in fatty acid biosynthesis. The protein is Acyl carrier protein of Nitrobacter hamburgensis (strain DSM 10229 / NCIMB 13809 / X14).